A 463-amino-acid chain; its full sequence is Probable mannan endo-1,4-beta-mannosidase F (463 aa).

The first 18 residues, Met-1–Ala-18, serve as a signal peptide directing secretion. One can recognise a CBM1 domain in the interval Gln-19–Val-54. Positions Ala-57–Ile-78 are disordered. A compositionally biased stretch (low complexity) spans Ser-59–Ser-77. Residues Ser-75–Ser-118 form a ser-rich linker region. N-linked (GlcNAc...) asparagine glycosylation occurs at Asn-87. The span at Ser-93–Ser-118 shows a compositional bias: low complexity. Residues Ser-93–Lys-121 are disordered. The interval Phe-119–Asn-463 is catalytic. 2 residues coordinate substrate: Trp-171 and Asn-285. Glu-286 acts as the Proton donor in catalysis. Tyr-361 lines the substrate pocket. Catalysis depends on Glu-395, which acts as the Nucleophile. Residue Trp-424 participates in substrate binding.

This sequence belongs to the glycosyl hydrolase 5 (cellulase A) family.

It is found in the secreted. The catalysed reaction is Random hydrolysis of (1-&gt;4)-beta-D-mannosidic linkages in mannans, galactomannans and glucomannans.. Its function is as follows. Endo-1,4-mannanase, a crucial enzyme for depolymerization of seed galactomannans and wood galactoglucomannans. The polypeptide is Probable mannan endo-1,4-beta-mannosidase F (manF) (Aspergillus flavus (strain ATCC 200026 / FGSC A1120 / IAM 13836 / NRRL 3357 / JCM 12722 / SRRC 167)).